A 141-amino-acid chain; its full sequence is Large ribosomal subunit protein uL11 (141 aa).

It belongs to the universal ribosomal protein uL11 family. As to quaternary structure, part of the ribosomal stalk of the 50S ribosomal subunit. Interacts with L10 and the large rRNA to form the base of the stalk. L10 forms an elongated spine to which L12 dimers bind in a sequential fashion forming a multimeric L10(L12)X complex. Post-translationally, one or more lysine residues are methylated.

In terms of biological role, forms part of the ribosomal stalk which helps the ribosome interact with GTP-bound translation factors. The sequence is that of Large ribosomal subunit protein uL11 from Prochlorococcus marinus (strain SARG / CCMP1375 / SS120).